We begin with the raw amino-acid sequence, 222 residues long: Cytidylate kinase (222 aa).

An ATP-binding site is contributed by 7–15 (GPSASGKSS).

The protein belongs to the cytidylate kinase family. Type 1 subfamily.

Its subcellular location is the cytoplasm. It catalyses the reaction CMP + ATP = CDP + ADP. The catalysed reaction is dCMP + ATP = dCDP + ADP. The protein is Cytidylate kinase of Borrelia turicatae (strain 91E135).